Reading from the N-terminus, the 82-residue chain is RNA-binding protein GK0100 (82 aa).

Belongs to the eukaryotic ribosomal protein eL8 family.

This is RNA-binding protein GK0100 from Geobacillus kaustophilus (strain HTA426).